Here is a 236-residue protein sequence, read N- to C-terminus: Orotidine 5'-phosphate decarboxylase (236 aa).

Substrate-binding positions include Asp-11, Lys-33, 60 to 69 (DLKLHDIPNT), Thr-119, Arg-181, Gln-190, Gly-210, and Arg-211. Residue Lys-62 is the Proton donor of the active site.

This sequence belongs to the OMP decarboxylase family. Type 1 subfamily. Homodimer.

The catalysed reaction is orotidine 5'-phosphate + H(+) = UMP + CO2. It functions in the pathway pyrimidine metabolism; UMP biosynthesis via de novo pathway; UMP from orotate: step 2/2. Functionally, catalyzes the decarboxylation of orotidine 5'-monophosphate (OMP) to uridine 5'-monophosphate (UMP). This Cutibacterium acnes (strain DSM 16379 / KPA171202) (Propionibacterium acnes) protein is Orotidine 5'-phosphate decarboxylase.